The chain runs to 604 residues: Inactive all-trans-retinol 13,14-reductase (604 aa).

Positions 1–17 are cleaved as a signal peptide; the sequence is MWWILLFLEWFVDWARG.

Belongs to the carotenoid/retinoid oxidoreductase family. CrtISO subfamily.

The polypeptide is Inactive all-trans-retinol 13,14-reductase (retsatl) (Danio rerio (Zebrafish)).